The following is a 151-amino-acid chain: FUN14 domain-containing protein 2 (151 aa).

Topologically, residues 1-42 are cytoplasmic; that stretch reads MAANSQGNFDGKFEALDLAELTKKQPWWRKLFGQESGPSAEK. The helical transmembrane segment at 43–63 threads the bilayer; sequence YSVATQLVIGGVTGWCTGFVF. Topologically, residues 64 to 69 are mitochondrial intermembrane; sequence QKVGKL. The helical transmembrane segment at 70–90 threads the bilayer; that stretch reads AATAVGGGFFLLQLANHTGYI. Residues 91-126 are Cytoplasmic-facing; the sequence is KVDWQRVEKDMKKAKEQLKIRKNKQIPTEVKSKAEE. A helical transmembrane segment spans residues 127–147; it reads VVSFVKKNVLVTGGFFGGFLL. Residues 148-151 lie on the Mitochondrial intermembrane side of the membrane; that stretch reads GMAS.

Belongs to the FUN14 family. Highly expressed in platelet (at protein level). Expressed in liver, brain, heart and muscle.

The protein resides in the mitochondrion outer membrane. The protein localises to the nucleus. In terms of biological role, binds directly and specifically 1,2-Diacyl-sn-glycero-3-phospho-(1'-myo-inositol-3',4',5'-bisphosphate) (PIP3) leading to the recruitment of PIP3 to mitochondria and may play a role in the regulation of the platelet activation via AKT/GSK3B/cGMP signaling pathways. May act as transcription factor that regulates SREBP1 (isoform SREBP-1C) expression in order to modulate triglyceride (TG) homeostasis in hepatocytes. This is FUN14 domain-containing protein 2 from Mus musculus (Mouse).